A 685-amino-acid chain; its full sequence is Sulfate transporter 4.1, chloroplastic (685 aa).

The N-terminal 23 residues, 1–23 (MSYASLSVKDLTSLVSRSGTGSS), are a transit peptide targeting the chloroplast. Residues 15–26 (VSRSGTGSSSSL) are compositionally biased toward low complexity. The disordered stretch occupies residues 15–53 (VSRSGTGSSSSLKPPGQTRPVKVIPLQHPDTSNEARPPS). A run of 12 helical transmembrane segments spans residues 97–117 (LDLMAGITVGIMLVPQAMSYA), 122–142 (LPPIYGLYSSFVPVFVYAIFG), 147–167 (LAIGPVALVSLLVSNALGGIA), 175–195 (IELAILLALLVGILECIMGLL), 203–223 (FISHSVISGFTSASAIVIGLS), 255–275 (WPPFVMGSLILVILQVMKHVG), 283–303 (FLRAAAPLTGIVLGTTIAKVF), 332–352 (TLLPTSALITGVAILESVGIA), 369–389 (LFGLGVANILGSLFSAYPATG), 406–426 (LSGLITGIIIGCSLLFLTPMF), 434–454 (LAAIVISAVSGLVDYDEAIFL), and 473–493 (LFFGIEIGVLVGVGFSLAFVI). One can recognise an STAS domain in the interval 518–642 (QYPEAYTYNG…VRVHDAVQVC (125 aa)).

Belongs to the SLC26A/SulP transporter (TC 2.A.53) family. As to expression, expressed both in roots and leaves.

The protein localises to the plastid. The protein resides in the chloroplast membrane. Its function is as follows. H(+)/sulfate cotransporter that may play a role in the regulation of sulfate assimilation. The chain is Sulfate transporter 4.1, chloroplastic (SULTR4;1) from Arabidopsis thaliana (Mouse-ear cress).